A 521-amino-acid chain; its full sequence is Ribonuclease Y 1 (521 aa).

A helical membrane pass occupies residues 1-21; it reads MEIVISAIIGLLIGGTVVFVI. The interval 51–87 is disordered; it reads IKKESENKAKDFESRARKNVEQDIHKQKSTLKNKESQ. The region spanning 211–271 is the KH domain; the sequence is TVSVLALPND…VRRELARRTI (61 aa). In terms of domain architecture, HD spans 337–430; it reads ALNQSLEVAT…VHAAYTLSSS (94 aa).

Belongs to the RNase Y family.

Its subcellular location is the cell membrane. Endoribonuclease that initiates mRNA decay. The chain is Ribonuclease Y 1 from Bdellovibrio bacteriovorus (strain ATCC 15356 / DSM 50701 / NCIMB 9529 / HD100).